We begin with the raw amino-acid sequence, 525 residues long: Mitochondrial-processing peptidase subunit alpha (525 aa).

The N-terminal 33 residues, 1-33 (MAAMVLAATRLLRGSGSWGRSRPRFGDPAYRRF), are a transit peptide targeting the mitochondrion. Position 64 is an N6-succinyllysine (lysine 64). At lysine 299 the chain carries N6-acetyllysine.

This sequence belongs to the peptidase M16 family. In terms of assembly, heterodimer of PMPCA (alpha) and PMPCB (beta) subunits, forming the mitochondrial processing protease (MPP) in which PMPCA is involved in substrate recognition and binding and PMPCB is the catalytic subunit.

Its subcellular location is the mitochondrion matrix. It localises to the mitochondrion inner membrane. Its function is as follows. Substrate recognition and binding subunit of the essential mitochondrial processing protease (MPP), which cleaves the mitochondrial sequence off newly imported precursors proteins. The chain is Mitochondrial-processing peptidase subunit alpha (PMPCA) from Bos taurus (Bovine).